We begin with the raw amino-acid sequence, 62 residues long: Large ribosomal subunit protein bL28 (62 aa).

Residues Met1 to Lys28 form a disordered region.

The protein belongs to the bacterial ribosomal protein bL28 family.

The sequence is that of Large ribosomal subunit protein bL28 from Bacillus cytotoxicus (strain DSM 22905 / CIP 110041 / 391-98 / NVH 391-98).